A 591-amino-acid chain; its full sequence is Pyruvate kinase 2 (591 aa).

Position 38 (Arg38) interacts with substrate. Residues Asn40, Ser42, and Asp72 each coordinate K(+). Position 40–43 (Asn40–His43) interacts with ATP. Positions 79 and 164 each coordinate ATP. Glu229 lines the Mg(2+) pocket. Substrate is bound by residues Gly252, Asp253, and Thr285. Residue Asp253 coordinates Mg(2+).

This sequence belongs to the pyruvate kinase family. The protein in the C-terminal section; belongs to the PEP-utilizing enzyme family. As to quaternary structure, homotetramer. Mg(2+) is required as a cofactor. K(+) serves as cofactor.

It catalyses the reaction pyruvate + ATP = phosphoenolpyruvate + ADP + H(+). The protein operates within carbohydrate degradation; glycolysis; pyruvate from D-glyceraldehyde 3-phosphate: step 5/5. The protein is Pyruvate kinase 2 (pyk2) of Synechocystis sp. (strain ATCC 27184 / PCC 6803 / Kazusa).